Consider the following 411-residue polypeptide: Indian hedgehog protein (411 aa).

The first 27 residues, 1 to 27 (MSPARLRPRLHFCLVLLLLLVVPAAWG), serve as a signal peptide directing secretion. C28 carries N-palmitoyl cysteine lipidation. Ca(2+) is bound by residues E94, E95, D100, T130, E131, D134, and D136. 3 residues coordinate Zn(2+): H145, D152, and H187. G202 carries Cholesterol glycine ester lipidation. N-linked (GlcNAc...) asparagine glycosylation occurs at N282.

Belongs to the hedgehog family. As to quaternary structure, multimer. Interacts with BOC and CDON. Interacts with PTCH1. Interacts with glypican GPC3. In terms of processing, cholesterylation is required for N-product targeting to lipid rafts and multimerization. Post-translationally, the C-terminal domain displays an autoproteolysis activity and a cholesterol transferase activity. Both activities result in the cleavage of the full-length protein and covalent attachment of a cholesterol moiety to the C-terminal of the newly generated N-product. The N-product is the active species in both local and long-range signaling, whereas the C-product is degraded in the endoplasmic reticulum. N-palmitoylation by HHAT of N-product is required for indian hedgehog protein N-product multimerization and full activity. Expressed in embryonic lung, and in adult kidney and liver.

The protein resides in the cell membrane. It localises to the endoplasmic reticulum membrane. It is found in the golgi apparatus membrane. The protein localises to the secreted. The catalysed reaction is glycyl-L-cysteinyl-[protein] + cholesterol + H(+) = [protein]-C-terminal glycyl cholesterol ester + N-terminal L-cysteinyl-[protein]. Plays a role in embryonic morphogenesis; it is involved in the regulation of endochondral skeleton formation, and the development of retinal pigment epithelium (RPE), photoreceptors and periocular tissues. In terms of biological role, the C-terminal part of the indian hedgehog protein precursor displays an autoproteolysis and a cholesterol transferase activity. Both activities result in the cleavage of the full-length protein into two parts followed by the covalent attachment of a cholesterol moiety to the C-terminal of the newly generated N-product. Both activities occur in the endoplasmic reticulum. Plays a role in hedgehog paracrine signaling. Associated with the very-low-density lipoprotein (VLDL) particles to function as a circulating morphogen for endothelial cell integrity maintenance. Its function is as follows. The dually lipidated indian hedgehog protein N-product is a morphogen which is essential for a variety of patterning events during development. Binds to the patched (PTCH1) receptor, which functions in association with smoothened (SMO), to activate the transcription of target genes. Plays a role in morphogenesis of the skeleton by coordinating growth and differentiation of the endochondral skeleton. Positively regulates PTHLH expression during endochondral bone formation preventing chondrocyte hypertrophy. In contrast, participates in normal chondrocyte proliferation in a PTHLH-independent pathway. The sequence is that of Indian hedgehog protein from Homo sapiens (Human).